The following is a 93-amino-acid chain: Regulatory protein RepI (93 aa).

Its function is as follows. This protein is involved in regulating the plasmid copy-number. Increasing the level of this protein results in a higher plasmid copy-number. In Escherichia coli, this protein is Regulatory protein RepI (repI).